A 210-amino-acid polypeptide reads, in one-letter code: MDLTVTNLACARGGVTVLERVSFRLSRGAALILRGPNGIGKTTLLRTVAGLQPAVAGEISMPPEAVAYAAHADGLKATLTVAENLAFWAAIYGTDRAARAIERMNLAALADRQAQNLSAGQKRRLGLARLLVTGRPLWVLDEPTVSLDAASVALFGDVVRTHLAEGGAALMATHIDLGLAEAEVLDLAPYRAETPAGTEPADDPFAGVTA.

An ABC transporter domain is found at 3–209 (LTVTNLACAR…PADDPFAGVT (207 aa)). An ATP-binding site is contributed by 35-42 (GPNGIGKT).

The protein belongs to the ABC transporter superfamily. CcmA exporter (TC 3.A.1.107) family. In terms of assembly, the complex is composed of two ATP-binding proteins (CcmA) and two transmembrane proteins (CcmB).

The protein localises to the cell inner membrane. It carries out the reaction heme b(in) + ATP + H2O = heme b(out) + ADP + phosphate + H(+). Its function is as follows. Part of the ABC transporter complex CcmAB involved in the biogenesis of c-type cytochromes; once thought to export heme, this seems not to be the case, but its exact role is uncertain. Responsible for energy coupling to the transport system. This chain is Cytochrome c biogenesis ATP-binding export protein CcmA, found in Cereibacter sphaeroides (strain ATCC 17023 / DSM 158 / JCM 6121 / CCUG 31486 / LMG 2827 / NBRC 12203 / NCIMB 8253 / ATH 2.4.1.) (Rhodobacter sphaeroides).